Reading from the N-terminus, the 156-residue chain is Snaclec A4 (156 aa).

An N-terminal signal peptide occupies residues 1–23 (MGRSISVSFGLLVVFLSLSGTGA). A disulfide bridge links cysteine 27 with cysteine 38. The C-type lectin domain maps to 34–155 (HEGHCYKVFN…CGQPYRFTCE (122 aa)). Asparagine 45 carries N-linked (GlcNAc...) asparagine glycosylation. 2 cysteine pairs are disulfide-bonded: cysteine 55–cysteine 154 and cysteine 129–cysteine 146.

It belongs to the snaclec family. As to quaternary structure, heterodimer; disulfide-linked. As to expression, expressed by the venom gland.

Its subcellular location is the secreted. Interferes with one step of hemostasis (modulation of platelet aggregation, or coagulation cascade, for example). The sequence is that of Snaclec A4 from Macrovipera lebetinus (Levantine viper).